A 484-amino-acid polypeptide reads, in one-letter code: Putative beta-barrel assembly-enhancing protease (484 aa).

The first 23 residues, 1–23 (MKFFPTRTLLCLCIAAPCLPAIA), serve as a signal peptide directing secretion. Position 133 (histidine 133) interacts with Zn(2+). Residue glutamate 134 is part of the active site. Zn(2+) contacts are provided by histidine 137 and glutamate 198. Aspartate 202 functions as the Proton donor in the catalytic mechanism. TPR repeat units lie at residues 307–340 (PSIQ…QPDN), 341–374 (HFYL…TPNN), 376–408 (VLTI…NPND), and 426–459 (AEDL…VELG).

The protein belongs to the peptidase M48 family. BepA subfamily. Requires Zn(2+) as cofactor.

The protein localises to the periplasm. Functions both as a chaperone and a metalloprotease. Maintains the integrity of the outer membrane by promoting either the assembly or the elimination of outer membrane proteins, depending on their folding state. The protein is Putative beta-barrel assembly-enhancing protease of Vibrio cholerae serotype O1 (strain ATCC 39315 / El Tor Inaba N16961).